The sequence spans 103 residues: Probable protease inhibitor Egf0.4a (103 aa).

The first 22 residues, Met1–Thr22, serve as a signal peptide directing secretion. In terms of domain architecture, TIL spans Cys35–Cys87.

It belongs to the polydnaviridae EGF-like motif protein family.

This Microplitis demolitor (Parasitoid wasp) protein is Probable protease inhibitor Egf0.4a (O4).